A 224-amino-acid polypeptide reads, in one-letter code: uncharacterized protein (224 aa).

A coiled-coil region spans residues 108-137 (QLALDRAELNESIRATNENLALQYSKLQTE).

This is an uncharacterized protein from Human picobirnavirus (strain Human/Thailand/Hy005102/-) (PBV).